The chain runs to 1418 residues: Transcriptional regulator ADR1 (1418 aa).

Low complexity-rich tracts occupy residues 34–44 and 68–93; these read TTTTANMSNTT and TSMSPSNSINSTNNNAAAAAATTTTS. A disordered region spans residues 34-96; the sequence is TTTTANMSNT…AATTTTSKKS (63 aa). 2 consecutive C2H2-type zinc fingers follow at residues 117–139 and 145–168; these read FVCQVCTRAFARLEHLRRHERSH and FSCGVCQRKFSRRDLLLRHAQKLH. Disordered regions lie at residues 181-285, 403-426, 454-484, 1132-1167, and 1338-1362; these read KSIK…LDQR, SQHGSFSHQSTFSATDMGQTRSES, VAAHHHHQQQQQHQQHNHQHQPNQSSLGLSR, NSNSRNRSKNDPTNEINNKLNNNNNNNNDMNNNNSN, and TNTNTTNTITTTTTTDNGTKQNQHH. The span at 189–211 shows a compositional bias: acidic residues; sequence GDDDDDDDDDDEEMANSEDENDH. The span at 236–278 shows a compositional bias: polar residues; the sequence is NLFNSKQKPTKANTTKSKVAKLSTTTSRKNSTNPTRKNSSSLH. 3 stretches are compositionally biased toward low complexity: residues 462–477, 1145–1167, and 1338–1356; these read QQQQHQQHNHQHQPNQ, NEINNKLNNNNNNNNDMNNNNSN, and TNTNTTNTITTTTTTDNGT.

The protein localises to the nucleus. Its function is as follows. Transcription factor involved in the regulation of hyphal growth. The polypeptide is Transcriptional regulator ADR1 (ADR1) (Candida albicans (strain SC5314 / ATCC MYA-2876) (Yeast)).